The following is a 386-amino-acid chain: D-galactosamine-6-phosphate deaminase AgaS (386 aa).

SIS domains follow at residues 59-217 (LTPI…CIEM) and 222-366 (LTER…PDNP).

Belongs to the SIS family. AgaS subfamily.

It localises to the cytoplasm. It catalyses the reaction D-galactosamine 6-phosphate + H2O = D-tagatopyranose 1-phosphate + NH4(+). It carries out the reaction alpha-D-glucosamine 6-phosphate + H2O = beta-D-fructose 6-phosphate + NH4(+). Involved in the pathway of N-acetyl-D-galactosamine degradation. Catalyzes the conversion of D-galactosamine 6-phosphate (GalN-6-P) to D-tagatofuranose 6-phosphate (Tag-6-P). It can also catalyze the conversion of D-glucosamine 6-phosphate. This chain is D-galactosamine-6-phosphate deaminase AgaS, found in Shewanella sp. (strain ANA-3).